Reading from the N-terminus, the 199-residue chain is NAD(P)H-quinone oxidoreductase chain 6 (199 aa).

Transmembrane regions (helical) follow at residues Ile9 to Leu29, Val32 to Leu52, Ala61 to Val81, Leu102 to Ile122, and Phe143 to Val163.

The protein belongs to the complex I subunit 6 family.

The protein resides in the membrane. It carries out the reaction a plastoquinone + NADH + (n+1) H(+)(in) = a plastoquinol + NAD(+) + n H(+)(out). The catalysed reaction is a plastoquinone + NADPH + (n+1) H(+)(in) = a plastoquinol + NADP(+) + n H(+)(out). NDH-1 shuttles electrons from NAD(P)H, via FMN and iron-sulfur (Fe-S) centers, to quinones in the respiratory chain. The immediate electron acceptor for the enzyme in this species is believed to be plastoquinone. Couples the redox reaction to proton translocation (for every two electrons transferred, four hydrogen ions are translocated across the cytoplasmic membrane), and thus conserves the redox energy in a proton gradient. The protein is NAD(P)H-quinone oxidoreductase chain 6 (ndhG) of Leptolyngbya boryana (Plectonema boryanum).